A 436-amino-acid chain; its full sequence is Testis-expressed protein 44 (436 aa).

Acidic residues-rich tracts occupy residues 1 to 10 (MTTEPLEDPE) and 45 to 54 (LPDEVPPEDI). Disordered regions lie at residues 1–142 (MTTE…LTSL) and 165–307 (AENN…SLYG). 2 stretches are compositionally biased toward polar residues: residues 81 to 103 (ASMQ…TDTS) and 167 to 195 (NNRT…TVSE). Over residues 234-247 (EPTKSADQEAEDFK) the composition is skewed to basic and acidic residues. Residues 273-289 (QAPPSPNSPADSPPPSP) are compositionally biased toward pro residues. Position 375 is a phosphoserine (serine 375).

It localises to the cytoplasm. This Rattus norvegicus (Rat) protein is Testis-expressed protein 44 (Tex44).